The primary structure comprises 602 residues: Multiple epidermal growth factor-like domains protein 9 (602 aa).

The first 30 residues, 1–30 (MNGGAERAMRSLPSLGGLALLCCAAAAAAA), serve as a signal peptide directing secretion. The Extracellular portion of the chain corresponds to 31 to 514 (AVASAASAGN…LADVSWTQFN (484 aa)). Positions 38-199 (AGNVTGGGGA…PATEAPSSPP (162 aa)) are disordered. A glycan (N-linked (GlcNAc...) asparagine) is linked at Asn40. 2 stretches are compositionally biased toward low complexity: residues 68-85 (PRAT…PPRA) and 139-166 (APTR…TVPA). The segment covering 167–176 (PTTPRTPTPD) has biased composition (pro residues). Asn182 carries an N-linked (GlcNAc...) asparagine glycan. The span at 187–199 (PTPPATEAPSSPP) shows a compositional bias: pro residues. Cystine bridges form between Cys204–Cys217, Cys206–Cys224, Cys226–Cys235, Cys238–Cys251, Cys254–Cys266, Cys256–Cys272, Cys274–Cys283, Cys286–Cys298, Cys301–Cys310, Cys303–Cys317, Cys320–Cys329, Cys332–Cys346, Cys349–Cys360, Cys351–Cys371, Cys374–Cys383, Cys386–Cys397, Cys400–Cys415, Cys402–Cys422, Cys425–Cys434, and Cys437–Cys449. Laminin EGF-like domains follow at residues 204-253 (CNCS…LCQP), 254-300 (CDCS…GCLP), 301-348 (CQCN…ECLR), 349-399 (CPCS…ICRK), and 400-451 (CQCH…NCIK). Residues Asn205 and Asn218 are each glycosylated (N-linked (GlcNAc...) asparagine). N-linked (GlcNAc...) asparagine glycosylation is present at Asn245. A glycan (N-linked (GlcNAc...) asparagine) is linked at Asn267. An N-linked (GlcNAc...) asparagine glycan is attached at Asn305. Asn428 is a glycosylation site (N-linked (GlcNAc...) asparagine). Asn468, Asn481, and Asn500 each carry an N-linked (GlcNAc...) asparagine glycan. A helical membrane pass occupies residues 515–535 (IIILTVIIIVVVLLMGFVGAV). The Cytoplasmic segment spans residues 536–602 (YMYREYQNRK…LTTPIHNYKA (67 aa)).

The protein localises to the membrane. The chain is Multiple epidermal growth factor-like domains protein 9 (MEGF9) from Homo sapiens (Human).